We begin with the raw amino-acid sequence, 110 residues long: U1-lycotoxin-Ls1aa (110 aa).

Positions 1–20 (MKFVLLFGVLLVTLFSYSSA) are cleaved as a signal peptide. Positions 21-44 (EMLDDFDQADEDELLSLIEKEEAR) are excised as a propeptide. 4 disulfides stabilise this stretch: cysteine 47–cysteine 62, cysteine 54–cysteine 71, cysteine 61–cysteine 89, and cysteine 73–cysteine 87.

Belongs to the neurotoxin 19 (CSTX) family. 03 subfamily. Expressed by the venom gland.

It is found in the secreted. This is U1-lycotoxin-Ls1aa from Lycosa singoriensis (Wolf spider).